The following is a 276-amino-acid chain: Putative pyridoxine kinase (276 aa).

Position 139 (Asn-139) interacts with ATP. Residue Glu-142 coordinates Mg(2+). ATP-binding positions include Lys-176–Ala-180, Asp-188, Gly-213, and Lys-238.

The protein belongs to the ThiD family.

The catalysed reaction is pyridoxal + ATP = pyridoxal 5'-phosphate + ADP + H(+). Phosphorylates B6 vitamers; functions in a salvage pathway. Uses pyridoxal, pyridoxine, and pyridoxamine as substrates. In Staphylococcus epidermidis (strain ATCC 35984 / DSM 28319 / BCRC 17069 / CCUG 31568 / BM 3577 / RP62A), this protein is Putative pyridoxine kinase (pdxK).